Here is a 527-residue protein sequence, read N- to C-terminus: G patch domain-containing protein 2 (527 aa).

Residues 35–135 form a disordered region; that stretch reads LEESSEQARG…RPSSNLSSSV (101 aa). Residues 62-76 are compositionally biased toward basic residues; sequence RQARKRRGRKRRSYN. Basic and acidic residues predominate over residues 97–116; it reads EPSKDYREKHSNNKKDRSDS. 3 positions are modified to phosphoserine: Ser114, Ser116, and Ser145. 3 disordered regions span residues 175 to 281, 350 to 375, and 480 to 527; these read SSKR…GDDE, TPSK…GSNK, and TPGS…GNPA. Residues 186–196 are compositionally biased toward basic and acidic residues; it reads GCRDQDMDNDR. The span at 206 to 215 shows a compositional bias: basic residues; sequence KKVKKRKLKG. Residues 231–257 show a composition bias toward basic and acidic residues; that stretch reads SEERSQPNKDRMEYEEQKASDELRSES. The region spanning 466 to 512 is the G-patch domain; it reads ESNIGNRMLQSMGWTPGSGLGRDGRGIAEPVQAVQRPKGLGLGFPLP. A compositionally biased stretch (low complexity) spans 510-527; the sequence is PLPKSSPTSPAPTSGNPA.

Interacts with DHX15.

The protein resides in the nucleus speckle. It localises to the nucleus. Its subcellular location is the nucleolus. Functionally, enhances the ATPase activity of DHX15 in vitro. This Mus musculus (Mouse) protein is G patch domain-containing protein 2 (Gpatch2).